Reading from the N-terminus, the 111-residue chain is uncharacterized protein (111 aa).

It belongs to the asfivirus E111R family.

This is an uncharacterized protein from Ornithodoros (relapsing fever ticks).